An 836-amino-acid polypeptide reads, in one-letter code: MLLSTWTPGCFQGNKILLRSLITWYYLEFMPKLRPFYFLFYLTLPSCATDSPPISDKSSSIFLPLAQQQQLVHWMMPPRFRCQDYLLPLLLALSPAAAAAREVEYHHCHCDGGGGGGGGGLWSMDSIFRRQKVSDLLIAAAYFSIPLEILYFVAGLRHLLPFRWVLVQFGAFIVLCGLTHLLTAFTYEPHPFMVVLLLTTAKFLTALVSFLTAITLLTLIPQLLRVKVRESLLWLKARELDREVVLMKRQEEASWHVRMLTHEIRKSLDRHTVLYTTLIELSLVLGLTNCAVWMPAAGEMCLTHELRRDGGGEDGVVGVDDADVVEVRGSDGVKLLGPDSVLAAASGGKEEGTGAVAAIRMPMLKVSDFKGGTPEVIQTSYAVLVLVPPAGKSWGRHEMEIVEVVAGQVAVALSHATLLEESRAMRDRLAEQNRELLQARRDALMANEARQAFQGVMSQGMRRPIHSILGLVSMVQEEALAPEQRLVVDTMARTATVVSTLVNDVMEMSADSRERFPLETRPFHLHAMIRDAACVARCLCDFRGFGFAVHVENALPDLVVGDERRIFHVLLHMVGNLIGRTEPGHVTLRVRAADDDVLDDRLGQRWDPRWPSYSTGYSSVKFVIGVKRQQNGDAGSPLSRRPSGKGIDLRLSFSMCRKLVQMMQGNIWAINDPQGLPESMTLVLRFQLQSPLTSSSLGGSFEQKHSSPSCQIAGLKVLLIDDDDDINLVVARKLLEKLGCVVSSPPSGSGFLSSVGSSAAAFQLVMVNLEMKRVKALDVATRISQYRSGRWPIVMAMASDQKAWEKCAQSGINGILKKPVILQELKDELARILQST.

The next 3 membrane-spanning stretches (helical) occupy residues 137–157 (LIAAAYFSIPLEILYFVAGLR), 166–186 (LVQFGAFIVLCGLTHLLTAFT), and 204–224 (LTALVSFLTAITLLTLIPQLL). Cu cation-binding residues include cysteine 176 and histidine 180. One can recognise a GAF domain in the interval 269 to 413 (DRHTVLYTTL…VVAGQVAVAL (145 aa)). A coiled-coil region spans residues 416 to 452 (ATLLEESRAMRDRLAEQNRELLQARRDALMANEARQA). Positions 457 to 691 (MSQGMRRPIH…LVLRFQLQSP (235 aa)) constitute a Histidine kinase domain. The Response regulatory domain maps to 718 to 834 (LLIDDDDDIN…LKDELARILQ (117 aa)).

This sequence belongs to the ethylene receptor family. It depends on Cu cation as a cofactor.

It localises to the endoplasmic reticulum membrane. It catalyses the reaction ATP + protein L-histidine = ADP + protein N-phospho-L-histidine.. Its function is as follows. Ethylene receptor related to bacterial two-component regulators. Acts as a negative regulator of ethylene signaling. May delay the transition from the vegetative stage to the floral stage by up-regulating GI (GIGANTEA) and RCN1 and cause starch accumulation in stems by down-regulating the alpha-amylase AMY3D. The chain is Ethylene receptor 3 from Oryza sativa subsp. indica (Rice).